The following is a 130-amino-acid chain: Small ribosomal subunit protein uS11 (130 aa).

This sequence belongs to the universal ribosomal protein uS11 family. As to quaternary structure, part of the 30S ribosomal subunit. Interacts with proteins S7 and S18. Binds to IF-3.

Functionally, located on the platform of the 30S subunit, it bridges several disparate RNA helices of the 16S rRNA. Forms part of the Shine-Dalgarno cleft in the 70S ribosome. This Gloeothece citriformis (strain PCC 7424) (Cyanothece sp. (strain PCC 7424)) protein is Small ribosomal subunit protein uS11.